We begin with the raw amino-acid sequence, 301 residues long: Phosducin-like protein (301 aa).

Position 2 is an N-acetylthreonine (T2). A disordered region spans residues 15-60; the sequence is YYYSTSEDEDSDHEDKDRGRGAPASSSTPAEAELAGEGISVNTGPK. Residues S20 and S25 each carry the phosphoserine modification. The span at 36–49 shows a compositional bias: low complexity; it reads APASSSTPAEAELA. A Phosducin domain is found at 36-299; that stretch reads APASSSTPAE…TCHSEDSDLE (264 aa). Residues 158–301 form a thioredoxin fold region; the sequence is FKQVLEIPSG…HSEDSDLEID (144 aa). Phosphoserine is present on residues S226, S293, and S296.

Belongs to the phosducin family. In terms of assembly, interacts with the CCT chaperonin complex. Forms a complex with the beta and gamma subunits of the GTP-binding protein, transducin.

Its subcellular location is the cell projection. The protein resides in the cilium. Its function is as follows. Functions as a co-chaperone for CCT in the assembly of heterotrimeric G protein complexes, facilitates the assembly of both Gbeta-Ggamma and RGS-Gbeta5 heterodimers. Also acts as a positive regulator of hedgehog signaling and regulates ciliary function. The protein is Phosducin-like protein (Pdcl) of Rattus norvegicus (Rat).